The chain runs to 212 residues: Large ribosomal subunit protein uL3 (212 aa).

The protein belongs to the universal ribosomal protein uL3 family. In terms of assembly, part of the 50S ribosomal subunit. Forms a cluster with proteins L14 and L19.

In terms of biological role, one of the primary rRNA binding proteins, it binds directly near the 3'-end of the 23S rRNA, where it nucleates assembly of the 50S subunit. This Ruminiclostridium cellulolyticum (strain ATCC 35319 / DSM 5812 / JCM 6584 / H10) (Clostridium cellulolyticum) protein is Large ribosomal subunit protein uL3.